We begin with the raw amino-acid sequence, 183 residues long: NEDD8-conjugating enzyme Ubc12 (183 aa).

Met-1 is subject to N-acetylmethionine. The interval Met-1–Ser-28 is disordered. The UBC core domain occupies Ala-29–Ile-173. Cys-111 (glycyl thioester intermediate) is an active-site residue.

It belongs to the ubiquitin-conjugating enzyme family. UBC12 subfamily. In terms of processing, the acetylation of Met-1 increases affinity for DCUN1D1 by about 2 orders of magnitude and is crucial for NEDD8 transfer to cullins.

It catalyses the reaction [E1 NEDD8-activating enzyme]-S-[NEDD8 protein]-yl-L-cysteine + [E2 NEDD8-conjugating enzyme]-L-cysteine = [E1 NEDD8-activating enzyme]-L-cysteine + [E2 NEDD8-conjugating enzyme]-S-[NEDD8-protein]-yl-L-cysteine.. The protein operates within protein modification; protein neddylation. Accepts the ubiquitin-like protein NEDD8 from the UBA3-NAE1 E1 complex and catalyzes its covalent attachment to other proteins. The specific interaction with the E3 ubiquitin ligase rbx1, but not rbx2, suggests that the rbx1-ube2m complex neddylates specific target proteins, such as cul1, cul2, cul3 and cul4. Involved in cell proliferation. This Xenopus tropicalis (Western clawed frog) protein is NEDD8-conjugating enzyme Ubc12 (ube2m).